The primary structure comprises 273 residues: ATP synthase F(1) complex subunit gamma, mitochondrial (273 aa).

N6-acetyllysine is present on Lys-14. The residue at position 24 (Lys-24) is an N6-succinyllysine. N6-acetyllysine is present on Lys-30. The residue at position 90 (Lys-90) is an N6-acetyllysine; alternate. Lys-90 is modified (N6-succinyllysine; alternate). N6-acetyllysine is present on Lys-113. The residue at position 121 (Ser-121) is a Phosphoserine. At Lys-129 the chain carries N6-acetyllysine; alternate. Residue Lys-129 is modified to N6-succinyllysine; alternate. N6-acetyllysine is present on Lys-172. N6-succinyllysine is present on Lys-245.

This sequence belongs to the ATPase gamma chain family. Component of the ATP synthase complex composed at least of ATP5F1A/subunit alpha, ATP5F1B/subunit beta, ATP5MC1/subunit c (homooctomer), MT-ATP6/subunit a, MT-ATP8/subunit 8, ATP5ME/subunit e, ATP5MF/subunit f, ATP5MG/subunit g, ATP5MK/subunit k, ATP5MJ/subunit j, ATP5F1C/subunit gamma, ATP5F1D/subunit delta, ATP5F1E/subunit epsilon, ATP5PF/subunit F6, ATP5PB/subunit b, ATP5PD/subunit d, ATP5PO/subunit OSCP. ATP synthase complex consists of a soluble F(1) head domain (subunits alpha(3) and beta(3)) - the catalytic core - and a membrane F(0) domain - the membrane proton channel (subunits c, a, 8, e, f, g, k and j). These two domains are linked by a central stalk (subunits gamma, delta, and epsilon) rotating inside the F1 region and a stationary peripheral stalk (subunits F6, b, d, and OSCP). Interacts with FLVCR2; this interaction occurs in the absence of heme and is disrupted upon heme binding.

The protein localises to the mitochondrion inner membrane. In terms of biological role, subunit gamma, of the mitochondrial membrane ATP synthase complex (F(1)F(0) ATP synthase or Complex V) that produces ATP from ADP in the presence of a proton gradient across the membrane which is generated by electron transport complexes of the respiratory chain. ATP synthase complex consist of a soluble F(1) head domain - the catalytic core - and a membrane F(1) domain - the membrane proton channel. These two domains are linked by a central stalk rotating inside the F(1) region and a stationary peripheral stalk. During catalysis, ATP synthesis in the catalytic domain of F(1) is coupled via a rotary mechanism of the central stalk subunits to proton translocation. In vivo, can only synthesize ATP although its ATP hydrolase activity can be activated artificially in vitro. With the central stalk subunit delta, is essential for the biogenesis of F(1) catalytic part of the ATP synthase complex namely in the formation of F1 assembly intermediate. In Rattus norvegicus (Rat), this protein is ATP synthase F(1) complex subunit gamma, mitochondrial.